The following is a 356-amino-acid chain: tRNA N6-adenosine threonylcarbamoyltransferase (356 aa).

Positions 115 and 119 each coordinate Fe cation. Substrate contacts are provided by residues 138 to 142 (LVSGG), Asp-171, Gly-184, and Asn-283. Asp-311 is a binding site for Fe cation.

It belongs to the KAE1 / TsaD family. Fe(2+) is required as a cofactor.

It is found in the cytoplasm. The catalysed reaction is L-threonylcarbamoyladenylate + adenosine(37) in tRNA = N(6)-L-threonylcarbamoyladenosine(37) in tRNA + AMP + H(+). Required for the formation of a threonylcarbamoyl group on adenosine at position 37 (t(6)A37) in tRNAs that read codons beginning with adenine. Is involved in the transfer of the threonylcarbamoyl moiety of threonylcarbamoyl-AMP (TC-AMP) to the N6 group of A37, together with TsaE and TsaB. TsaD likely plays a direct catalytic role in this reaction. The sequence is that of tRNA N6-adenosine threonylcarbamoyltransferase from Prochlorococcus marinus (strain MIT 9313).